Consider the following 598-residue polypeptide: Elongation factor 4 (598 aa).

Positions 2-184 (TKIRNFSIIA…AVVDRIPPPS (183 aa)) constitute a tr-type G domain. GTP is bound by residues 14-19 (DHGKST) and 131-134 (NKID).

Belongs to the TRAFAC class translation factor GTPase superfamily. Classic translation factor GTPase family. LepA subfamily.

It is found in the cell inner membrane. The enzyme catalyses GTP + H2O = GDP + phosphate + H(+). Functionally, required for accurate and efficient protein synthesis under certain stress conditions. May act as a fidelity factor of the translation reaction, by catalyzing a one-codon backward translocation of tRNAs on improperly translocated ribosomes. Back-translocation proceeds from a post-translocation (POST) complex to a pre-translocation (PRE) complex, thus giving elongation factor G a second chance to translocate the tRNAs correctly. Binds to ribosomes in a GTP-dependent manner. This Syntrophobacter fumaroxidans (strain DSM 10017 / MPOB) protein is Elongation factor 4.